We begin with the raw amino-acid sequence, 168 residues long: MTTDTASNGNGSAQQQSPSLNILAQYVKDLSFENPGAPRSLQARDRSPSININVNVNANPLAENDFDVVLSLSAQAKDGDKMLFNVELAYGGVFRVAGFPQEHMLPLLFIECPRLLFPFARQIVADATRNGGFPPLMIDPIDFAQMFAQRMAEEKVRAQVANTNDTAN.

This sequence belongs to the SecB family. In terms of assembly, homotetramer, a dimer of dimers. One homotetramer interacts with 1 SecA dimer.

It localises to the cytoplasm. In terms of biological role, one of the proteins required for the normal export of preproteins out of the cell cytoplasm. It is a molecular chaperone that binds to a subset of precursor proteins, maintaining them in a translocation-competent state. It also specifically binds to its receptor SecA. The polypeptide is Protein-export protein SecB (Rhizobium meliloti (strain 1021) (Ensifer meliloti)).